Reading from the N-terminus, the 879-residue chain is Alanine--tRNA ligase (879 aa).

Zn(2+) is bound by residues H567, H571, C669, and H673.

The protein belongs to the class-II aminoacyl-tRNA synthetase family. Requires Zn(2+) as cofactor.

The protein localises to the cytoplasm. It catalyses the reaction tRNA(Ala) + L-alanine + ATP = L-alanyl-tRNA(Ala) + AMP + diphosphate. Catalyzes the attachment of alanine to tRNA(Ala) in a two-step reaction: alanine is first activated by ATP to form Ala-AMP and then transferred to the acceptor end of tRNA(Ala). Also edits incorrectly charged Ser-tRNA(Ala) and Gly-tRNA(Ala) via its editing domain. The sequence is that of Alanine--tRNA ligase from Lactobacillus helveticus (strain DPC 4571).